Here is a 1064-residue protein sequence, read N- to C-terminus: Probable ATP-dependent DNA helicase CHR23 (1064 aa).

The Helicase ATP-binding domain occupies 398 to 563 (VSLYNNDYNG…WSLLNFLLPH (166 aa)). 411–418 (DEMGLGKT) lines the ATP pocket. The DEAH box signature appears at 513–516 (DEGH). The 168-residue stretch at 699-866 (LLDRLLPKLK…DRREMLEEIM (168 aa)) folds into the Helicase C-terminal domain. 2 disordered regions span residues 924 to 955 (AYTS…AVYS) and 967 to 1064 (MESE…SKRN). The span at 1002-1014 (ESDEEKEEEEEER) shows a compositional bias: acidic residues. A compositionally biased stretch (low complexity) spans 1048 to 1064 (SSPNSRGKGSSKGSKRN).

The protein belongs to the helicase family. As to expression, expressed in embryos, root apical meristem (RAM) and shoot apical meristem (SAM).

It is found in the nucleus. The enzyme catalyses ATP + H2O = ADP + phosphate + H(+). Functionally, probable chromatin-remodeling factor that is functionally redundant with CHR12 in root and shoot stem cell initiation and root apical meristem (RAM) and shoot apical meristem (SAM) maintenance. Can associate with the promoter region of WOX5. May promote seed maturation and repress initiation of germination. May repress plant growth. This Arabidopsis thaliana (Mouse-ear cress) protein is Probable ATP-dependent DNA helicase CHR23.